Consider the following 325-residue polypeptide: Lipid droplet-associated hydrolase (325 aa).

Ser-139 (nucleophile) is an active-site residue. Catalysis depends on charge relay system residues Asp-271 and His-300.

Belongs to the AB hydrolase superfamily. LDAH family.

It localises to the lipid droplet. The protein resides in the endoplasmic reticulum. The enzyme catalyses a cholesterol ester + H2O = cholesterol + a fatty acid + H(+). Functionally, probable serine lipid hydrolase associated with lipid droplets. Has low cholesterol esterase activity. Appears to lack triglyceride lipase activity. Involved in cholesterol and triglyceride homeostasis; stimulates cellular triglyceride accumulation and cellular cholesterol release. Acts antagonistically with PNPLA2/ATGL in regulation of cellular lipid stores. May regulate triglyceride accumulation indirectly through stimulation of PNPLA2/ATGL ubiquitination and proteasomal degradation. Promotes microtubule-dependent lipid droplet fusion. Highly expressed in macrophage-rich areas in atherosclerotic lesions, suggesting that it could promote cholesterol ester turnover in macrophages. This Pongo abelii (Sumatran orangutan) protein is Lipid droplet-associated hydrolase.